A 456-amino-acid chain; its full sequence is Enolase (456 aa).

Glutamine 177 is a (2R)-2-phosphoglycerate binding site. The Proton donor role is filled by glutamate 219. Aspartate 256, glutamate 310, and aspartate 337 together coordinate Mg(2+). Residues lysine 362, arginine 391, serine 392, and lysine 413 each contribute to the (2R)-2-phosphoglycerate site. The active-site Proton acceptor is the lysine 362.

Belongs to the enolase family. In terms of assembly, homodimer. The cofactor is Mg(2+).

The protein resides in the cytoplasm. The protein localises to the secreted. Its subcellular location is the cell surface. The enzyme catalyses (2R)-2-phosphoglycerate = phosphoenolpyruvate + H2O. It participates in carbohydrate degradation; glycolysis; pyruvate from D-glyceraldehyde 3-phosphate: step 4/5. In terms of biological role, catalyzes the reversible conversion of 2-phosphoglycerate (2-PG) into phosphoenolpyruvate (PEP). It is essential for the degradation of carbohydrates via glycolysis. Its function is as follows. 'Moonlights' as a plasminogen receptor. Binds plasminogen, but no fibronectin binding was observed. Plasminogen binding increases bacterial adherence to host cells; plasmin activity leads to degradation of host extracellular matrix proteins, facilitating bacterial dissemination and disease spread. This Mycoplasma pneumoniae (strain ATCC 29342 / M129 / Subtype 1) (Mycoplasmoides pneumoniae) protein is Enolase.